We begin with the raw amino-acid sequence, 88 residues long: Small ribosomal subunit protein uS17 (88 aa).

It belongs to the universal ribosomal protein uS17 family. Part of the 30S ribosomal subunit.

In terms of biological role, one of the primary rRNA binding proteins, it binds specifically to the 5'-end of 16S ribosomal RNA. The chain is Small ribosomal subunit protein uS17 from Methylorubrum extorquens (strain PA1) (Methylobacterium extorquens).